The sequence spans 137 residues: Large ribosomal subunit protein uL16 (137 aa).

It belongs to the universal ribosomal protein uL16 family. Part of the 50S ribosomal subunit.

In terms of biological role, binds 23S rRNA and is also seen to make contacts with the A and possibly P site tRNAs. This is Large ribosomal subunit protein uL16 from Sinorhizobium medicae (strain WSM419) (Ensifer medicae).